The following is a 208-amino-acid chain: Large ribosomal subunit protein uL4 (208 aa).

The interval 46–84 (QGTHKAKTRAEVRGGGRKPFRQKGTGNARQGSTRSPLMI) is disordered. Residues 69–80 (GTGNARQGSTRS) show a composition bias toward polar residues.

This sequence belongs to the universal ribosomal protein uL4 family. As to quaternary structure, part of the 50S ribosomal subunit.

Functionally, one of the primary rRNA binding proteins, this protein initially binds near the 5'-end of the 23S rRNA. It is important during the early stages of 50S assembly. It makes multiple contacts with different domains of the 23S rRNA in the assembled 50S subunit and ribosome. In terms of biological role, forms part of the polypeptide exit tunnel. The sequence is that of Large ribosomal subunit protein uL4 from Chlorobium limicola (strain DSM 245 / NBRC 103803 / 6330).